The following is a 361-amino-acid chain: Cyclin-D3-3 (361 aa).

The protein belongs to the cyclin family. Cyclin D subfamily.

In terms of biological role, promotes divisions in the guard cells (GCs) after the guard mother cells (GMC) symmetric division. This chain is Cyclin-D3-3 (CYCD3-3), found in Arabidopsis thaliana (Mouse-ear cress).